A 371-amino-acid polypeptide reads, in one-letter code: Protein STRICTOSIDINE SYNTHASE-LIKE 6 (371 aa).

Residues 1–21 (MPVFLSSRFLFFCIIVPLLIS) form the signal peptide. N-linked (GlcNAc...) asparagine glycosylation is found at Asn101 and Asn137. Tyr303 bears the Phosphotyrosine mark.

The protein belongs to the strictosidine synthase family.

The protein localises to the vacuole. The protein is Protein STRICTOSIDINE SYNTHASE-LIKE 6 of Arabidopsis thaliana (Mouse-ear cress).